The chain runs to 185 residues: MSSSMSTLRNQFLIAMPHLKDPNFEGTISYICDHNDEGAMGIVINRPLDIRLSDMLAQLELGGEGIAMPVYSGGPVQIERGFVLHSPLGDWQSSIEIAPDICITTSKDILEAMARGVGPDRTLVALGYAGWGAGQLEKEISNNFWITCPADSAIIFRTPDSEKVVSALGRVGIDYHRLSSISGHA.

This sequence belongs to the UPF0301 (AlgH) family.

This is UPF0301 protein HCH_00550 from Hahella chejuensis (strain KCTC 2396).